A 182-amino-acid polypeptide reads, in one-letter code: ATP synthase subunit delta (182 aa).

It belongs to the ATPase delta chain family. In terms of assembly, F-type ATPases have 2 components, F(1) - the catalytic core - and F(0) - the membrane proton channel. F(1) has five subunits: alpha(3), beta(3), gamma(1), delta(1), epsilon(1). F(0) has three main subunits: a(1), b(2) and c(10-14). The alpha and beta chains form an alternating ring which encloses part of the gamma chain. F(1) is attached to F(0) by a central stalk formed by the gamma and epsilon chains, while a peripheral stalk is formed by the delta and b chains.

It is found in the cell membrane. Functionally, f(1)F(0) ATP synthase produces ATP from ADP in the presence of a proton or sodium gradient. F-type ATPases consist of two structural domains, F(1) containing the extramembraneous catalytic core and F(0) containing the membrane proton channel, linked together by a central stalk and a peripheral stalk. During catalysis, ATP synthesis in the catalytic domain of F(1) is coupled via a rotary mechanism of the central stalk subunits to proton translocation. In terms of biological role, this protein is part of the stalk that links CF(0) to CF(1). It either transmits conformational changes from CF(0) to CF(1) or is implicated in proton conduction. This chain is ATP synthase subunit delta, found in Syntrophomonas wolfei subsp. wolfei (strain DSM 2245B / Goettingen).